A 290-amino-acid chain; its full sequence is Nucleoid occlusion protein (290 aa).

The segment at residues 153 to 172 (EALAQRLGKGQSTIANKLRL) is a DNA-binding region (H-T-H motif).

The protein belongs to the ParB family.

It is found in the cytoplasm. It localises to the nucleoid. Its function is as follows. Effects nucleoid occlusion by binding relatively nonspecifically to DNA and preventing the assembly of the division machinery in the vicinity of the nucleoid, especially under conditions that disturb the cell cycle. It helps to coordinate cell division and chromosome segregation by preventing the formation of the Z ring through the nucleoid, which would cause chromosome breakage. The polypeptide is Nucleoid occlusion protein (Bacillus cereus (strain AH187)).